We begin with the raw amino-acid sequence, 188 residues long: Elongation factor P (188 aa).

It belongs to the elongation factor P family.

The protein localises to the cytoplasm. It functions in the pathway protein biosynthesis; polypeptide chain elongation. Functionally, involved in peptide bond synthesis. Stimulates efficient translation and peptide-bond synthesis on native or reconstituted 70S ribosomes in vitro. Probably functions indirectly by altering the affinity of the ribosome for aminoacyl-tRNA, thus increasing their reactivity as acceptors for peptidyl transferase. The polypeptide is Elongation factor P (Christiangramia forsetii (strain DSM 17595 / CGMCC 1.15422 / KT0803) (Gramella forsetii)).